Here is a 503-residue protein sequence, read N- to C-terminus: Maturase K (503 aa).

It belongs to the intron maturase 2 family. MatK subfamily.

Its subcellular location is the plastid. It is found in the chloroplast. Functionally, usually encoded in the trnK tRNA gene intron. Probably assists in splicing its own and other chloroplast group II introns. This is Maturase K from Purshia tridentata (Antelope bitterbrush).